The sequence spans 246 residues: Protein lin-37 homolog (246 aa).

An N-acetylmethionine modification is found at Met1. Glycyl lysine isopeptide (Lys-Gly) (interchain with G-Cter in SUMO2) cross-links involve residues Lys5 and Lys7. The segment covering 36–55 (DRERLDEEPGKTSLDTHNKD) has biased composition (basic and acidic residues). Disordered regions lie at residues 36–90 (DRER…GGPQ) and 127–209 (PTVR…LIYR). Phosphoserine occurs at positions 135 and 138. A compositionally biased stretch (pro residues) spans 163–172 (LPPPTAPGPP). Thr167 is modified (phosphothreonine). Residues Ser182 and Ser202 each carry the phosphoserine modification.

Component of the DREAM complex (also named LINC complex) at least composed of E2F4, E2F5, LIN9, LIN37, LIN52, LIN54, MYBL1, MYBL2, RBL1, RBL2, RBBP4, TFDP1 and TFDP2. The complex exists in quiescent cells where it represses cell cycle-dependent genes. It dissociates in S phase when LIN9, LIN37, LIN52 and LIN54 form a subcomplex that binds to MYBL2.

The sequence is that of Protein lin-37 homolog (LIN37) from Bos taurus (Bovine).